A 62-amino-acid chain; its full sequence is Bowman-Birk type proteinase inhibitor (62 aa).

7 disulfides stabilise this stretch: Cys8–Cys61, Cys9–Cys24, Cys12–Cys57, Cys14–Cys22, Cys31–Cys38, Cys35–Cys50, and Cys40–Cys48.

Forms a monomer at protein concentrations of below 1 mM. At concentrations of above 2 mM, self-associates.

Its function is as follows. Inhibits trypsin but not chymotrypsin. Inhibits the trypsin-like proteinase activity present in larvae of the crop pests Adoxophyes orana, Hyphantria cunea, Lobesia botrana and Ostrinia nubilalis. This chain is Bowman-Birk type proteinase inhibitor, found in Medicago scutellata (Snail medic).